Here is a 125-residue protein sequence, read N- to C-terminus: Holo-[acyl-carrier-protein] synthase (125 aa).

Mg(2+) is bound by residues Glu9 and Gln58.

It belongs to the P-Pant transferase superfamily. AcpS family. The cofactor is Mg(2+).

The protein localises to the cytoplasm. The catalysed reaction is apo-[ACP] + CoA = holo-[ACP] + adenosine 3',5'-bisphosphate + H(+). Transfers the 4'-phosphopantetheine moiety from coenzyme A to a Ser of acyl-carrier-protein. The sequence is that of Holo-[acyl-carrier-protein] synthase from Rhodopirellula baltica (strain DSM 10527 / NCIMB 13988 / SH1).